Consider the following 265-residue polypeptide: Basic leucine zipper 6 (265 aa).

Disordered regions lie at residues 1 to 24 (MAQLPPKIPVAAPGHHQHWASAGG) and 77 to 139 (LMSM…RDPK). Residues 85 to 97 (GGSSAPGSDNGGS) are compositionally biased toward low complexity. Polar residues predominate over residues 122 to 132 (TQEQAAATSPT). One can recognise a bZIP domain in the interval 137-189 (DPKRVKRILANRQSAQRSRVRKLQYISELERSVTTLQNEVSVLSPRVAFLDQQ). The segment at 139–158 (KRVKRILANRQSAQRSRVRK) is basic motif. The leucine-zipper stretch occupies residues 165–186 (LERSVTTLQNEVSVLSPRVAFL). The tract at residues 239-265 (LSGGLAADHAHVHGGPPPVRAEKELMS) is disordered.

As to expression, expressed in roots, shoots and panicles.

Its subcellular location is the nucleus. Functionally, transcription regulator. The polypeptide is Basic leucine zipper 6 (BZIP06) (Oryza sativa subsp. japonica (Rice)).